A 345-amino-acid chain; its full sequence is Leucine-rich repeat-containing protein 69 (345 aa).

LRR repeat units follow at residues 13 to 34, 36 to 58, 59 to 80, 82 to 103, 106 to 127, 129 to 151, 152 to 173, 175 to 196, 198 to 219, and 220 to 241; these read KAKTLNLNGKRLQRVPVAVGCL, SLTELQLKNNLLCRLPVELSALC, RLRVLHLGNNHFEKVPEEIKYL, CLERLHLFGNRISEIPAAALDG, NLLFLNLNNNLLEHLPREIYKL, SLETLSINNNHMKAIPKELCFLQ, NLQELHLANNQLDSLPDELSYL, NLKELRLSRNQLTGLPEGICKL, KLKILDVAGNFIRSFPSAMHRV, and PLTELYCEENPLLEKQPVFARQ.

The protein belongs to the LRRC69 family.

This is Leucine-rich repeat-containing protein 69 (lrrc69) from Xenopus laevis (African clawed frog).